Here is a 218-residue protein sequence, read N- to C-terminus: Mitochondrial import inner membrane translocase subunit TIM17-1 (218 aa).

The next 4 membrane-spanning stretches (helical) occupy residues 19–36, 66–82, 89–105, and 116–133; these read VGGAFAMGAVGGSAYHLI, FSVWGGLYSTFDCALVY, PWNSILSGAATGGFLSL, and ALVGGVLLAMIEGVGIML.

This sequence belongs to the Tim17/Tim22/Tim23 family. In terms of assembly, component of the TIM17:23 complex at least composed of TIM23, TIM17 and TIM50. The complex interacts with the TIM44 component of the PAM complex. Expressed in flowers, leaves and cotyledons, and at very low levels in roots.

The protein resides in the mitochondrion inner membrane. In terms of biological role, essential component of the TIM17:23 complex, a complex that mediates the translocation of transit peptide-containing proteins across the mitochondrial inner membrane. Links the inner and outer membranes. This Arabidopsis thaliana (Mouse-ear cress) protein is Mitochondrial import inner membrane translocase subunit TIM17-1 (TIM17-1).